The primary structure comprises 446 residues: Putative diacyglycerol O-acyltransferase Rv3371 (446 aa).

Histidine 129 (proton acceptor) is an active-site residue. The interval 425-446 (SRALPSAARRGRPSVPTARARH) is disordered.

The protein belongs to the long-chain O-acyltransferase family.

It carries out the reaction an acyl-CoA + a 1,2-diacyl-sn-glycerol = a triacyl-sn-glycerol + CoA. It catalyses the reaction di-(9Z)-octadecenoylglycerol + (9Z)-octadecenoyl-CoA = 1,2,3-tri-(9Z-octadecenoyl)-glycerol + CoA. It functions in the pathway glycerolipid metabolism; triacylglycerol biosynthesis. Its function is as follows. Catalyzes the terminal and only committed step in triacylglycerol synthesis by using diacylglycerol and fatty acyl CoA as substrates. Required for storage lipid synthesis. Upon expression in E.coli functions weakly as a triacylglycerol synthase, making triacylglycerol (TG) from diolein and long-chain fatty acyl-CoA. Has no wax synthase activity to produce wax esters. In Mycobacterium tuberculosis (strain ATCC 25618 / H37Rv), this protein is Putative diacyglycerol O-acyltransferase Rv3371.